We begin with the raw amino-acid sequence, 307 residues long: tRNA N(3)-methylcytidine methyltransferase trm140 (307 aa).

The S-adenosyl-L-methionine site is built by W83, Y87, G125, D150, D176, L177, and I197.

This sequence belongs to the methyltransferase superfamily. METL family.

It catalyses the reaction cytidine(32) in tRNA(Thr) + S-adenosyl-L-methionine = N(3)-methylcytidine(32) in tRNA(Thr) + S-adenosyl-L-homocysteine + H(+). In terms of biological role, S-adenosyl-L-methionine-dependent methyltransferase that mediates N(3)-methylcytidine modification of residue 32 of the tRNA anticodon loop of tRNA(Thr). Does not catalyze N(3)-methylcytidine modification of tRNA(Ser). In Schizosaccharomyces pombe (strain 972 / ATCC 24843) (Fission yeast), this protein is tRNA N(3)-methylcytidine methyltransferase trm140.